The primary structure comprises 284 residues: RNase adapter protein RapZ (284 aa).

Residue 8-15 (GRSGSGKS) participates in ATP binding. Residue 56-59 (DVRN) participates in GTP binding. Positions 266–284 (RSRGKNVQSRHRTLEKRKS) are RNA-binding.

Belongs to the RapZ-like family. RapZ subfamily. Homotrimer.

Modulates the synthesis of GlmS, by affecting the processing and stability of the regulatory small RNA GlmZ. When glucosamine-6-phosphate (GlcN6P) concentrations are high in the cell, RapZ binds GlmZ and targets it to cleavage by RNase E. Consequently, GlmZ is inactivated and unable to activate GlmS synthesis. Under low GlcN6P concentrations, RapZ is sequestered and inactivated by an other regulatory small RNA, GlmY, preventing GlmZ degradation and leading to synthesis of GlmS. The polypeptide is RNase adapter protein RapZ (Klebsiella pneumoniae (strain 342)).